We begin with the raw amino-acid sequence, 630 residues long: Scarecrow-like protein 34 (630 aa).

Positions 240-628 (KKKKSQVVDF…RTLYASSCWV (389 aa)) constitute a GRAS domain. The leucine repeat I (LRI) stretch occupies residues 247–312 (VDFRTLLTHC…GSTGPMIQTY (66 aa)). Residues 331–396 (YRVYLSSSPF…DVPRKLRITG (66 aa)) form a VHIID region. The VHIID motif lies at 362-366 (LHIVD). A leucine repeat II (LRII) region spans residues 412 to 444 (ETGRRLAEYCKRFNVPFEYKAIASQNWETIRIE). The segment at 454–549 (LAVNAGLRLK…REFYGREAMN (96 aa)) is PFYRE. Positions 552 to 628 (ACEEADRVER…RTLYASSCWV (77 aa)) are SAW.

It belongs to the GRAS family.

Its subcellular location is the nucleus. Functionally, probable transcription factor involved in plant development. The chain is Scarecrow-like protein 34 (SCL34) from Arabidopsis thaliana (Mouse-ear cress).